We begin with the raw amino-acid sequence, 481 residues long: Halobacterial transducer protein 9 (481 aa).

In terms of domain architecture, PAS spans 10–81; that stretch reads SPFTVPLLLN…NKVADTPIDA (72 aa). In terms of domain architecture, Methyl-accepting transducer spans 208-444; it reads DVERLEAASQ…EIAAMVDETA (237 aa).

This sequence belongs to the methyl-accepting chemotaxis (MCP) protein family.

It localises to the cytoplasm. In terms of biological role, potentially involved in chemo- or phototactic signal transduction. The chain is Halobacterial transducer protein 9 (htr9) from Halobacterium salinarum (strain ATCC 700922 / JCM 11081 / NRC-1) (Halobacterium halobium).